A 465-amino-acid polypeptide reads, in one-letter code: Cysteine--tRNA ligase (465 aa).

Cys-27 is a binding site for Zn(2+). A 'HIGH' region motif is present at residues 29-39 (PTVYDDAHLGH). Zn(2+)-binding residues include Cys-207, His-237, and Glu-241. The 'KMSKS' region signature appears at 269-273 (KMSKS). Lys-272 serves as a coordination point for ATP.

This sequence belongs to the class-I aminoacyl-tRNA synthetase family. Monomer. It depends on Zn(2+) as a cofactor.

It is found in the cytoplasm. It carries out the reaction tRNA(Cys) + L-cysteine + ATP = L-cysteinyl-tRNA(Cys) + AMP + diphosphate. The protein is Cysteine--tRNA ligase of Nitratiruptor sp. (strain SB155-2).